A 445-amino-acid chain; its full sequence is ATP-dependent protease ATPase subunit HslU (445 aa).

ATP is bound by residues Ile18, 60-65 (GVGKTE), Asp258, Glu323, and Arg395.

It belongs to the ClpX chaperone family. HslU subfamily. In terms of assembly, a double ring-shaped homohexamer of HslV is capped on each side by a ring-shaped HslU homohexamer. The assembly of the HslU/HslV complex is dependent on binding of ATP.

It localises to the cytoplasm. Functionally, ATPase subunit of a proteasome-like degradation complex; this subunit has chaperone activity. The binding of ATP and its subsequent hydrolysis by HslU are essential for unfolding of protein substrates subsequently hydrolyzed by HslV. HslU recognizes the N-terminal part of its protein substrates and unfolds these before they are guided to HslV for hydrolysis. The sequence is that of ATP-dependent protease ATPase subunit HslU from Syntrophotalea carbinolica (strain DSM 2380 / NBRC 103641 / GraBd1) (Pelobacter carbinolicus).